The sequence spans 377 residues: Prostaglandin E synthase 2 (377 aa).

The Lumenal portion of the chain corresponds to 1–65 (MAAACTRTLG…LAAPVRGSGR (65 aa)). A helical transmembrane segment spans residues 66-83 (VLGCAFLLGGGFGLYQTI). The region spanning 105–182 (LKLTLYQYKT…ALKTYISSKD (78 aa)) is the GST N-terminal domain. Glutathione contacts are provided by residues V153 and 166–167 (DS). One can recognise a GST C-terminal domain in the interval 266 to 377 (YIVREGKFGS…RMQKATQHVS (112 aa)).

Belongs to the GST superfamily. Homodimer.

The protein localises to the golgi apparatus membrane. The enzyme catalyses prostaglandin H2 = prostaglandin E2. It carries out the reaction prostaglandin H2 = (12S)-hydroxy-(5Z,8E,10E)-heptadecatrienoate + malonaldehyde. Its pathway is lipid metabolism; prostaglandin biosynthesis. Isomerase activity is increased by sulfhydril compounds. Dithiothreitol (DTT) is most effective, followed by glutathione (GSH) and 2-mercaptoethanol. In terms of biological role, isomerase that catalyzes the conversion of PGH2 into the more stable prostaglandin E2 (PGE2) (in vitro). The biological function and the GSH-dependent property of PTGES2 is still under debate. In vivo, PTGES2 could form a complex with GSH and heme and would not participate in PGE2 synthesis but would catalyze the degradation of prostaglandin E2 H2 (PGH2) to 12(S)-hydroxy-5(Z),8(E),10(E)-heptadecatrienoic acid (HHT) and malondialdehyde (MDA). This is Prostaglandin E synthase 2 (ptges2) from Danio rerio (Zebrafish).